The sequence spans 60 residues: UPF0434 protein ESA_02427 (60 aa).

The protein belongs to the UPF0434 family.

The sequence is that of UPF0434 protein ESA_02427 from Cronobacter sakazakii (strain ATCC BAA-894) (Enterobacter sakazakii).